The primary structure comprises 127 residues: Ribosome-binding factor A (127 aa).

Belongs to the RbfA family. As to quaternary structure, monomer. Binds 30S ribosomal subunits, but not 50S ribosomal subunits or 70S ribosomes.

It is found in the cytoplasm. One of several proteins that assist in the late maturation steps of the functional core of the 30S ribosomal subunit. Associates with free 30S ribosomal subunits (but not with 30S subunits that are part of 70S ribosomes or polysomes). Required for efficient processing of 16S rRNA. May interact with the 5'-terminal helix region of 16S rRNA. The protein is Ribosome-binding factor A of Geobacillus kaustophilus (strain HTA426).